A 455-amino-acid polypeptide reads, in one-letter code: Glutamyl-tRNA reductase (455 aa).

Substrate contacts are provided by residues 49 to 52 (TCNR), S109, 114 to 116 (ETQ), and Q120. The Nucleophile role is filled by C50. Residue 189–194 (GAGKMG) participates in NADP(+) binding.

This sequence belongs to the glutamyl-tRNA reductase family. As to quaternary structure, homodimer.

It carries out the reaction (S)-4-amino-5-oxopentanoate + tRNA(Glu) + NADP(+) = L-glutamyl-tRNA(Glu) + NADPH + H(+). It functions in the pathway porphyrin-containing compound metabolism; protoporphyrin-IX biosynthesis; 5-aminolevulinate from L-glutamyl-tRNA(Glu): step 1/2. Catalyzes the NADPH-dependent reduction of glutamyl-tRNA(Glu) to glutamate 1-semialdehyde (GSA). The sequence is that of Glutamyl-tRNA reductase from Bacillus velezensis (strain DSM 23117 / BGSC 10A6 / LMG 26770 / FZB42) (Bacillus amyloliquefaciens subsp. plantarum).